The following is a 306-amino-acid chain: Glutathione transport system permease protein GsiC (306 aa).

Residues 1-8 (MLNYVLKR) lie on the Cytoplasmic side of the membrane. The helical transmembrane segment at 9-29 (LLGLIPTLLIVAVLVFLFVHL) threads the bilayer. At 30 to 102 (LPGDPARLIA…SRFLPTLWLT (73 aa)) the chain is on the periplasmic side. The region spanning 95 to 292 (FLPTLWLTIT…LEFILINLVV (198 aa)) is the ABC transmembrane type-1 domain. Residues 103–123 (ITSMIWAVLFGMAIGIAAAVW) traverse the membrane as a helical segment. The Cytoplasmic segment spans residues 124–134 (RNRWPDRLGMT). A helical membrane pass occupies residues 135-155 (LAVTGISFPAFALGMLLMQIF). Residues 156-168 (SVDLGWLPTVGAD) are Periplasmic-facing. A helical membrane pass occupies residues 169 to 189 (SWQHYILPSLTLGAAVASVMA). Residues 190–228 (RFTRSSFVDVLSEDYMRTARAKGVSETWVVLKHGLRNAM) are Cytoplasmic-facing. A helical membrane pass occupies residues 229 to 249 (IPVVTMMGLQFGFLLGGSIVV). The Periplasmic segment spans residues 250-278 (EKVFNWPGLGRLLVDSVDMRDYPVIQAEV). Residues 279–299 (LLFSLEFILINLVVDVLYAAI) form a helical membrane-spanning segment. The Cytoplasmic portion of the chain corresponds to 300 to 306 (NPAIRYK).

Belongs to the binding-protein-dependent transport system permease family. In terms of assembly, the complex is composed of two ATP-binding proteins (GsiA), two transmembrane proteins (GsiC and GsiD) and a solute-binding protein (GsiB).

Its subcellular location is the cell inner membrane. In terms of biological role, part of the ABC transporter complex GsiABCD involved in glutathione import. Probably responsible for the translocation of the substrate across the membrane. The chain is Glutathione transport system permease protein GsiC from Salmonella typhimurium (strain LT2 / SGSC1412 / ATCC 700720).